The sequence spans 219 residues: LexA repressor (219 aa).

A DNA-binding region (H-T-H motif) is located at residues 28–48 (RAEIAAELGFRSANAAEEHLQ). Active-site for autocatalytic cleavage activity residues include Ser138 and Lys175.

Belongs to the peptidase S24 family. As to quaternary structure, homodimer.

The catalysed reaction is Hydrolysis of Ala-|-Gly bond in repressor LexA.. Represses a number of genes involved in the response to DNA damage (SOS response), including recA and lexA. In the presence of single-stranded DNA, RecA interacts with LexA causing an autocatalytic cleavage which disrupts the DNA-binding part of LexA, leading to derepression of the SOS regulon and eventually DNA repair. The protein is LexA repressor of Herminiimonas arsenicoxydans.